Reading from the N-terminus, the 404-residue chain is Glucose-1-phosphate adenylyltransferase (404 aa).

Alpha-D-glucose 1-phosphate-binding positions include Tyr-99, Gly-164, 179-180 (EK), and Ser-197.

It belongs to the bacterial/plant glucose-1-phosphate adenylyltransferase family.

It catalyses the reaction alpha-D-glucose 1-phosphate + ATP + H(+) = ADP-alpha-D-glucose + diphosphate. It functions in the pathway capsule biogenesis; capsule polysaccharide biosynthesis. It participates in glycan biosynthesis; glycogen biosynthesis. Involved in the biosynthesis of ADP-glucose, a building block, required in the biosynthesis of maltose-1-phosphate (M1P) and in the elongation reactions to produce linear alpha-1,4-glucans. Catalyzes the reaction between ATP and alpha-D-glucose 1-phosphate (G1P) to produce pyrophosphate and ADP-Glc. This chain is Glucose-1-phosphate adenylyltransferase, found in Mycobacterium bovis (strain ATCC BAA-935 / AF2122/97).